The chain runs to 247 residues: Tetraspanin-18 (247 aa).

The Cytoplasmic segment spans residues 1-15 (MEGDCLSCMKYLMFL). A helical membrane pass occupies residues 16–36 (FNFFIFLGGACLLGVGIWVIV). Topologically, residues 37–49 (DPTGFREIVAANP) are extracellular. The helical transmembrane segment at 50–70 (LLFTGAYIMLAMGAMLFLLGF) threads the bilayer. At 71–82 (LGCCGAIRENKC) the chain is on the cytoplasmic side. Residues 83-103 (LLLFFFMFILLIFLAELSAAI) traverse the membrane as a helical segment. Residues 104–222 (LAFIFRENLT…SFETYVYLAG (119 aa)) are Extracellular-facing. Residues N111 and N129 are each glycosylated (N-linked (GlcNAc...) asparagine). The chain crosses the membrane as a helical span at residues 223–243 (ALAIGVLAIELFAMIFAMCLF). Topologically, residues 244–247 (RGIQ) are cytoplasmic.

Belongs to the tetraspanin (TM4SF) family.

The protein localises to the membrane. Functionally, maintains CDH6 protein and promotes CDH6-dependent adherens junctions, inhibiting neural crest migration. This chain is Tetraspanin-18, found in Gallus gallus (Chicken).